The following is a 72-amino-acid chain: UPF0352 protein Patl_3379 (72 aa).

This sequence belongs to the UPF0352 family.

This is UPF0352 protein Patl_3379 from Pseudoalteromonas atlantica (strain T6c / ATCC BAA-1087).